The chain runs to 76 residues: Small ribosomal subunit protein bS18 (76 aa).

It belongs to the bacterial ribosomal protein bS18 family. In terms of assembly, part of the 30S ribosomal subunit. Forms a tight heterodimer with protein bS6.

Its function is as follows. Binds as a heterodimer with protein bS6 to the central domain of the 16S rRNA, where it helps stabilize the platform of the 30S subunit. The polypeptide is Small ribosomal subunit protein bS18 (Neisseria gonorrhoeae (strain ATCC 700825 / FA 1090)).